A 747-amino-acid polypeptide reads, in one-letter code: Potassium transporter 20 (747 aa).

Residues 1–47 (MSVQEDDDAAGPEVDRLRRHDSFYGDAEKVSNDKSHGTGENWARTLQ) are Cytoplasmic-facing. Residues 48 to 68 (LAFQSIGVVYGDVGTSPLYVY) form a helical membrane-spanning segment. Topologically, residues 69–84 (SSTFPDGVKHPDDLVG) are extracellular. A helical membrane pass occupies residues 85 to 105 (VLSLMLYTLILIPMVKYVFIV). Over 106–171 (LYANDNGDGG…QKLESSNAAK (66 aa)) the chain is Cytoplasmic. The helical transmembrane segment at 172-192 (IALFTITILGTSMVMGDGTLT) threads the bilayer. Topologically, residues 193–209 (PAISVLSAVSGIREKAP) are extracellular. Residues 210 to 230 (SLTQLQVVWISVPILIVLFSV) form a helical membrane-spanning segment. At 231–237 (QRFGTDK) the chain is on the cytoplasmic side. A helical transmembrane segment spans residues 238 to 258 (VGYSFAPVISVWFVLIAGIGA). Residues 259 to 288 (YNLAVHEITILRAFNPMYIIDYFRRNGKEA) are Extracellular-facing. A helical membrane pass occupies residues 289 to 309 (WVSLGGAVLCITGTEAMFADL). Over 310–318 (GHFNIRAIQ) the chain is Cytoplasmic. A helical transmembrane segment spans residues 319-339 (LSFTCVLFPSVALCYMGQAAY). The Extracellular portion of the chain corresponds to 340-353 (LRKFPEDVGDTFYK). Residues 354 to 374 (SLPAPLFWPVFVVAIMAAIIA) form a helical membrane-spanning segment. Over 375–410 (SQAMLSGAFAILSKALPLGCFPRVEVVHTSNKYEGQ) the chain is Cytoplasmic. The helical transmembrane segment at 411–431 (VYIPEVNFLIGVASVAITVAF) threads the bilayer. Topologically, residues 432-442 (QTTANIGNAYG) are extracellular. The chain crosses the membrane as a helical span at residues 443–463 (ICVVMVFSITTHLMTVVMLLI). Residues 464–469 (WKVRLP) are Cytoplasmic-facing. The chain crosses the membrane as a helical span at residues 470–490 (FIAAFYVVFTFTEFLYLSSIL). Residues 491–496 (SKFAEG) are Extracellular-facing. A helical transmembrane segment spans residues 497 to 517 (GYLPFCFSLVLMALMATWHYV). Over 518–747 (HVKRYWYELD…LLKVGITYEI (230 aa)) the chain is Cytoplasmic.

Belongs to the HAK/KUP transporter (TC 2.A.72.3) family.

It is found in the membrane. High-affinity potassium transporter. The sequence is that of Potassium transporter 20 (HAK20) from Oryza sativa subsp. japonica (Rice).